We begin with the raw amino-acid sequence, 318 residues long: MRLAPLYRNALLLTGLLLSGIAAVQAADWPRQITDSRGTHTLESQPQRIVSTSVTLTGSLLAIDAPVIASGATTPNNRVADDQGFLRQWSKVAKERKLQRLYIGEPSAEAVAAQMPDLILISATGGDSALALYDQLSTIAPTLIINYDDKSWQSLLTQLGEITGHEKQAAERIAQFDKQLAAAKEQIKLPPQPVTAIVYTAAAHSANLWTPESAQGQMLEQLGFTLAKLPAGLNASQSQGKRHDIIQLGGENLAAGLNGESLFLFAGDQKDADAIYANPLLAHLPAVQNKQVYALGTETFRLDYYSAMQVLDRLKALF.

The first 26 residues, 1 to 26 (MRLAPLYRNALLLTGLLLSGIAAVQA), serve as a signal peptide directing secretion. A Fe/B12 periplasmic-binding domain is found at 48–318 (RIVSTSVTLT…QVLDRLKALF (271 aa)).

This sequence belongs to the bacterial solute-binding protein 8 family. The complex is composed of two ATP-binding proteins (FepC), two transmembrane proteins (FepD and FepG) and a solute-binding protein (FepB).

It localises to the periplasm. Part of the ABC transporter complex FepBDGC involved in ferric enterobactin uptake. Binds ferric enterobactin. This is Ferric enterobactin-binding periplasmic protein FepB (fepB) from Escherichia coli O6:H1 (strain CFT073 / ATCC 700928 / UPEC).